Reading from the N-terminus, the 1113-residue chain is Lon protease homolog, mitochondrial (1113 aa).

The transit peptide at M1 to R61 directs the protein to the mitochondrion. The segment at S42 to S196 is disordered. Basic and acidic residues-rich tracts occupy residues K64–A99, K124–N143, and D178–L192. In terms of domain architecture, Lon N-terminal spans V204–L456. G609–T616 contributes to the ATP binding site. Basic and acidic residues predominate over residues L828–T858. Positions L828–V864 are disordered. One can recognise a Lon proteolytic domain in the interval T898–D1084. Residues S990 and K1033 contribute to the active site.

It belongs to the peptidase S16 family. In terms of assembly, homohexamer or homoheptamer. Organized in a ring with a central cavity.

It localises to the mitochondrion matrix. It catalyses the reaction Hydrolysis of proteins in presence of ATP.. ATP-dependent serine protease that mediates the selective degradation of misfolded, unassembled or oxidatively damaged polypeptides as well as certain short-lived regulatory proteins in the mitochondrial matrix. May also have a chaperone function in the assembly of inner membrane protein complexes. Participates in the regulation of mitochondrial gene expression and in the maintenance of the integrity of the mitochondrial genome. Binds to mitochondrial DNA in a site-specific manner. In Aspergillus niger (strain ATCC MYA-4892 / CBS 513.88 / FGSC A1513), this protein is Lon protease homolog, mitochondrial (pim1).